The sequence spans 411 residues: Adherens junction-associated protein 1 (411 aa).

The signal sequence occupies residues 1–43 (MWIQQLLGLSSMPIRWPGRSLGSHLWILIAMLQLAVDFPSCDS). Topologically, residues 44–283 (LGPGPEFRLL…GETSGLAVHQ (240 aa)) are extracellular. 3 stretches are compositionally biased toward low complexity: residues 62 to 76 (LWSL…LPTP), 121 to 145 (PPAA…AGAA), and 247 to 264 (TPVG…SNNG). 2 disordered regions span residues 62 to 156 (LWSL…RGRR) and 242 to 270 (DPWK…IQPP). Residues 284-304 (IITITVSLIMVIAALITTLVL) form a helical membrane-spanning segment. The targeting signals stretch occupies residues 304–411 (LKNCCAPSGH…VSEKWFEISC (108 aa)). Residues 305-411 (KNCCAPSGHT…VSEKWFEISC (107 aa)) lie on the Cytoplasmic side of the membrane.

As to quaternary structure, forms a complex with CDH1 and CTNNB1; interacts directly with CTNNB1. Interacts with AP1M2 and with isoform 2 of BSG/CD147.

The protein resides in the basolateral cell membrane. The protein localises to the apical cell membrane. It localises to the cell junction. It is found in the adherens junction. Its function is as follows. Plays a role in cell adhesion and cell migration. The sequence is that of Adherens junction-associated protein 1 (Ajap1) from Rattus norvegicus (Rat).